We begin with the raw amino-acid sequence, 248 residues long: Ubiquinone/menaquinone biosynthesis C-methyltransferase UbiE (248 aa).

Positions 68 and 92 each coordinate S-adenosyl-L-methionine.

The protein belongs to the class I-like SAM-binding methyltransferase superfamily. MenG/UbiE family.

The catalysed reaction is a 2-demethylmenaquinol + S-adenosyl-L-methionine = a menaquinol + S-adenosyl-L-homocysteine + H(+). The enzyme catalyses a 2-methoxy-6-(all-trans-polyprenyl)benzene-1,4-diol + S-adenosyl-L-methionine = a 5-methoxy-2-methyl-3-(all-trans-polyprenyl)benzene-1,4-diol + S-adenosyl-L-homocysteine + H(+). Its pathway is quinol/quinone metabolism; menaquinone biosynthesis; menaquinol from 1,4-dihydroxy-2-naphthoate: step 2/2. It participates in cofactor biosynthesis; ubiquinone biosynthesis. Methyltransferase required for the conversion of demethylmenaquinol (DMKH2) to menaquinol (MKH2) and the conversion of 2-polyprenyl-6-methoxy-1,4-benzoquinol (DDMQH2) to 2-polyprenyl-3-methyl-6-methoxy-1,4-benzoquinol (DMQH2). This chain is Ubiquinone/menaquinone biosynthesis C-methyltransferase UbiE, found in Rickettsia africae (strain ESF-5).